A 64-amino-acid chain; its full sequence is Micrurotoxin 1 (64 aa).

5 disulfides stabilise this stretch: cysteine 3–cysteine 24, cysteine 6–cysteine 11, cysteine 17–cysteine 41, cysteine 45–cysteine 57, and cysteine 58–cysteine 63.

Belongs to the three-finger toxin family. Ancestral subfamily. Expressed by the venom gland.

Its subcellular location is the secreted. In terms of biological role, allosteric modulator of the GABA(A) receptor (GABR), possibly increasing receptor affinity for the agonist, thus enhancing receptor opening and macroscopic desensitization. In vivo, intracerebroventricular injection into mice results in periods of reduced basal activity, followed by bursts of intense seizures and death. The polypeptide is Micrurotoxin 1 (Micrurus mipartitus (Red-tailed coral snake)).